The primary structure comprises 237 residues: Class B acid phosphatase (237 aa).

Positions 1-23 (MRKVTLVFSAIAFAFSLNGVVQA) are cleaved as a signal peptide. Residue aspartate 69 is the Nucleophile of the active site. Mg(2+) contacts are provided by aspartate 69 and aspartate 71. Aspartate 71 serves as the catalytic Proton donor. Substrate is bound by residues 137–138 (TG) and lysine 177. Aspartate 192 serves as a coordination point for Mg(2+).

This sequence belongs to the class B bacterial acid phosphatase family. Homotetramer. The cofactor is Mg(2+).

It localises to the periplasm. The catalysed reaction is a phosphate monoester + H2O = an alcohol + phosphate. Dephosphorylates several organic phosphate monoesters. Also has a phosphotransferase activity catalyzing the transfer of low-energy phosphate groups from organic phosphate monoesters to free hydroxyl groups of various organic compounds. The polypeptide is Class B acid phosphatase (Xenorhabdus bovienii (strain SS-2004) (Xenorhabdus nematophila subsp. bovienii)).